A 644-amino-acid chain; its full sequence is Mitochondrial 15S rRNA processing factor CCM1 (644 aa).

Residues 1 to 38 (MVIVASSNMLRPDRIWLCGKYQTARTLYVVGNKSKRRN) constitute a mitochondrion transit peptide. A disordered region spans residues 78-108 (ISKKSEKEVERSQIQSTEPSPETSTQLTQKN). A compositionally biased stretch (polar residues) spans 89-108 (SQIQSTEPSPETSTQLTQKN). 3 PPR repeats span residues 245-279 (PRETYELLIRAYGKNSNLEMVNSILTEMKQVGLQP), 280-315 (SKNTFENILATSVYKSKDHKQAVEVFDTMKFLSDKT), and 318-352 (AERAYRDIIVSYVNNDDIEKALDLYNEMVENKVEV).

The protein belongs to the CCM1 family. In terms of assembly, binds to mitochondrial small subunit 15S rRNA.

It localises to the mitochondrion. In terms of biological role, regulates mitochondrial small subunit maturation by controlling 15S rRNA 5'-end processing. Localizes to the 5' precursor of the 15S rRNA in a position that is subsequently occupied by mS47 in the mature yeast mtSSU. Uses structure and sequence-specific RNA recognition, binding to a single-stranded region of the precursor and specifically recognizing bases -6 to -1. The exchange of Ccm1 for mS47 is coupled to the irreversible removal of precursor rRNA that is accompanied by conformational changes of the mitoribosomal proteins uS5m and mS26. These conformational changes signal completion of 5'-end rRNA processing through protection of the mature 5'-end of the 15S rRNA and stabilization of mS47. The removal of the 5' precursor together with the dissociation of Ccm1 may be catalyzed by the 5'-3' exoribonuclease Pet127. Involved in the specific removal of group I introns in mitochondrial encoded transcripts. This is Mitochondrial 15S rRNA processing factor CCM1 (CCM1) from Meyerozyma guilliermondii (strain ATCC 6260 / CBS 566 / DSM 6381 / JCM 1539 / NBRC 10279 / NRRL Y-324) (Yeast).